The chain runs to 307 residues: Porphobilinogen deaminase (307 aa).

An S-(dipyrrolylmethanemethyl)cysteine modification is found at Cys-239.

Belongs to the HMBS family. Monomer. Dipyrromethane serves as cofactor.

The enzyme catalyses 4 porphobilinogen + H2O = hydroxymethylbilane + 4 NH4(+). Its pathway is porphyrin-containing compound metabolism; protoporphyrin-IX biosynthesis; coproporphyrinogen-III from 5-aminolevulinate: step 2/4. Its function is as follows. Tetrapolymerization of the monopyrrole PBG into the hydroxymethylbilane pre-uroporphyrinogen in several discrete steps. The chain is Porphobilinogen deaminase from Campylobacter jejuni subsp. doylei (strain ATCC BAA-1458 / RM4099 / 269.97).